The following is a 101-amino-acid chain: Small ribosomal subunit protein uS14 (101 aa).

It belongs to the universal ribosomal protein uS14 family. In terms of assembly, part of the 30S ribosomal subunit. Contacts proteins S3 and S10.

Functionally, binds 16S rRNA, required for the assembly of 30S particles and may also be responsible for determining the conformation of the 16S rRNA at the A site. The polypeptide is Small ribosomal subunit protein uS14 (Paraburkholderia phymatum (strain DSM 17167 / CIP 108236 / LMG 21445 / STM815) (Burkholderia phymatum)).